A 319-amino-acid chain; its full sequence is Cobalamin biosynthesis protein CbiB (319 aa).

5 helical membrane-spanning segments follow: residues 56-76, 82-102, 153-173, 204-224, and 296-316; these read VMWVVVVGATWGVAWGVLALA, WFGWSVEVWMIFTTLAGRSLA, VDGIIAPLFFLFLGGAPLAMA, VANYLPARLSWLLLGIAAGLC, and LMWVASTLALALFIAARCGLS.

The protein belongs to the CobD/CbiB family.

It is found in the cell membrane. Its pathway is cofactor biosynthesis; adenosylcobalamin biosynthesis. Functionally, converts cobyric acid to cobinamide by the addition of aminopropanol on the F carboxylic group. However, the true cosubstrate could be (R)-1-amino-2-propanol O-2-phosphate, leading to cobinamide phosphate. This chain is Cobalamin biosynthesis protein CbiB, found in Salmonella paratyphi B (strain ATCC BAA-1250 / SPB7).